Here is a 397-residue protein sequence, read N- to C-terminus: uncharacterized protein (397 aa).

Helical transmembrane passes span 10-30 (FIIFVLMICTFSIGYTEYAVM), 48-68 (GLLVTAYAASVCLTGPLVTII), 76-96 (PVLLGLMAIFILSNLMSALAP), 106-126 (ILSASIHGAFFAIAMVFASEM), 141-161 (GGLTVALMLGVPFGSYLGDVL), 165-185 (AVFSIITALGVIGFLGLMAAV), 209-229 (LFSFAITILGYSGVFIAYTFI), 242-262 (VGITGALFAYGLGGVAGNFFA), 274-294 (MIGVMIGLIGVLAVFPYIAIY), 296-316 (AAAIVATFLFGACAFGTPPLL), 334-354 (VSVSAFNLANALGAWIGGMIL), and 363-383 (LFAGGALMTACGLVLSTFAHL).

It belongs to the major facilitator superfamily.

The protein localises to the cell membrane. This is an uncharacterized protein from Bacillus subtilis (strain 168).